We begin with the raw amino-acid sequence, 59 residues long: Large ribosomal subunit protein bL32 (59 aa).

The protein belongs to the bacterial ribosomal protein bL32 family.

The polypeptide is Large ribosomal subunit protein bL32 (Desulfitobacterium hafniense (strain Y51)).